Reading from the N-terminus, the 165-residue chain is Small ribosomal subunit protein uS5 (165 aa).

Positions 13–76 (LEEKVLVVNR…EAARKNLITI (64 aa)) constitute an S5 DRBM domain.

Belongs to the universal ribosomal protein uS5 family. Part of the 30S ribosomal subunit. Contacts proteins S4 and S8.

In terms of biological role, with S4 and S12 plays an important role in translational accuracy. Located at the back of the 30S subunit body where it stabilizes the conformation of the head with respect to the body. This is Small ribosomal subunit protein uS5 from Chlamydia caviae (strain ATCC VR-813 / DSM 19441 / 03DC25 / GPIC) (Chlamydophila caviae).